The following is a 63-amino-acid chain: Small ribosomal subunit protein eS17 (63 aa).

Belongs to the eukaryotic ribosomal protein eS17 family.

This chain is Small ribosomal subunit protein eS17, found in Methanococcus vannielii (strain ATCC 35089 / DSM 1224 / JCM 13029 / OCM 148 / SB).